The following is a 123-amino-acid chain: Small ribosomal subunit protein uS12 (123 aa).

A disordered region spans residues 1 to 45 (MPTINQLIRKKRQSGATRKKSPALQKSPQKRGVCLQVKTKTPKKP). Basic residues predominate over residues 8 to 21 (IRKKRQSGATRKKS).

Belongs to the universal ribosomal protein uS12 family. Part of the 30S ribosomal subunit. Contacts proteins S8 and S17. May interact with IF1 in the 30S initiation complex.

With S4 and S5 plays an important role in translational accuracy. Functionally, interacts with and stabilizes bases of the 16S rRNA that are involved in tRNA selection in the A site and with the mRNA backbone. Located at the interface of the 30S and 50S subunits, it traverses the body of the 30S subunit contacting proteins on the other side and probably holding the rRNA structure together. The combined cluster of proteins S8, S12 and S17 appears to hold together the shoulder and platform of the 30S subunit. This is Small ribosomal subunit protein uS12 from Chlamydia muridarum (strain MoPn / Nigg).